Reading from the N-terminus, the 445-residue chain is O-fucosyltransferase 23 (445 aa).

Residues 12 to 34 (IFSKSVACKCLVLVGIALFYRAL) form a helical; Signal-anchor for type II membrane protein membrane-spanning segment. 2 N-linked (GlcNAc...) asparagine glycosylation sites follow: N97 and N179. 258–260 (HMR) provides a ligand contact to substrate. N294 carries an N-linked (GlcNAc...) asparagine glycan. Residue 374–375 (TF) coordinates substrate. N424 is a glycosylation site (N-linked (GlcNAc...) asparagine).

The protein belongs to the glycosyltransferase GT106 family. In terms of tissue distribution, expressed in dry pollen grains and germinating pollen grains.

It is found in the golgi apparatus membrane. It functions in the pathway glycan metabolism. Functionally, probable protein O-fucosyltransferase required for correct pollen tube penetration through the stigma-style interface. May be involved in protein O-glycosylation events during pollen-pistil interactions. The sequence is that of O-fucosyltransferase 23 from Arabidopsis thaliana (Mouse-ear cress).